The primary structure comprises 280 residues: Tumor necrosis factor ligand superfamily member 6 (280 aa).

The Cytoplasmic portion of the chain corresponds to 1 to 80; that stretch reads MQQPLNYPYP…KTRRDHNTGL (80 aa). Residues 20 to 71 form a disordered region; the sequence is SSPWGPPGSVLPCPSSVPGRPGQRRPPPPPPPTLPPPPPPPPLPPLPLPPLK. The span at 43-69 shows a compositional bias: pro residues; it reads RRPPPPPPPTLPPPPPPPPLPPLPLPP. A helical; Signal-anchor for type II membrane protein transmembrane segment spans residues 81–101; it reads CLLVMFFMVLVALVGLGLGMF. Residues 102–280 are Extracellular-facing; that stretch reads QLFHLQKELA…SKTFFGLYKL (179 aa). Positions 144 to 280 constitute a THD domain; it reads KVAHLTGKPN…SKTFFGLYKL (137 aa). Asn183 carries an N-linked (GlcNAc...) asparagine glycan. Cys201 and Cys232 are joined by a disulfide. Asn249 and Asn259 each carry an N-linked (GlcNAc...) asparagine glycan.

This sequence belongs to the tumor necrosis factor family. In terms of assembly, homotrimer. Interacts with ARHGAP9, BAIAP2L1, BTK, CACNB3, CACNB4, CRK, DLG2, DNMBP, DOCK4, EPS8L3, FGR, FYB1, FYN, HCK, ITK, ITSN2, KALRN, LYN, MACC1, MIA, MPP4, MYO15A, NCF1, NCK1, NCK2, NCKIPSD, OSTF1, PIK3R1, PSTPIP1, RIMBP3C, SAMSN1, SH3GL3, SH3PXD2B, SH3PXD2A, SH3RF2, SKAP2, SNX33, SNX9, SORBS3, SPTA1, SRC, SRGAP1, SRGAP2, SRGAP3, TEC, TJP3 and YES1. Post-translationally, the soluble form derives from the membrane form by proteolytic processing. The membrane-bound form undergoes two successive intramembrane proteolytic cleavages. The first one is processed by ADAM10 producing an N-terminal fragment, which lacks the receptor-binding extracellular domain. This ADAM10-processed FasL (FasL APL) remnant form is still membrane anchored and further processed by SPPL2A that liberates the FasL intracellular domain (FasL ICD). FasL shedding by ADAM10 is a prerequisite for subsequent intramembrane cleavage by SPPL2A in T-cells. Phosphorylated by FGR on tyrosine residues; this is required for ubiquitination and subsequent internalization. In terms of processing, N-glycosylated. Glycosylation enhances apoptotic activity. Post-translationally, monoubiquitinated.

The protein localises to the cell membrane. The protein resides in the cytoplasmic vesicle lumen. It localises to the lysosome lumen. Its subcellular location is the secreted. It is found in the nucleus. In terms of biological role, cytokine that binds to TNFRSF6/FAS, a receptor that transduces the apoptotic signal into cells. Involved in cytotoxic T-cell-mediated apoptosis, natural killer cell-mediated apoptosis and in T-cell development. Initiates fratricidal/suicidal activation-induced cell death (AICD) in antigen-activated T-cells contributing to the termination of immune responses. TNFRSF6/FAS-mediated apoptosis has also a role in the induction of peripheral tolerance. Binds to TNFRSF6B/DcR3, a decoy receptor that blocks apoptosis. Functionally, induces FAS-mediated activation of NF-kappa-B, initiating non-apoptotic signaling pathways. Can induce apoptosis but does not appear to be essential for this process. Its function is as follows. Cytoplasmic form induces gene transcription inhibition. The sequence is that of Tumor necrosis factor ligand superfamily member 6 (FASLG) from Felis catus (Cat).